The primary structure comprises 88 residues: HssA/B-like protein 64 (88 aa).

A compositionally biased stretch (low complexity) spans 1-24; that stretch reads MTLFSSISSMSSSMTSSKSSFASF. 2 disordered regions span residues 1 to 25 and 45 to 88; these read MTLF…ASFG and GVSS…GNSC. Residues 56–66 are compositionally biased toward gly residues; it reads AKSGGDCGGKG.

It belongs to the hssA/B family.

The chain is HssA/B-like protein 64 (hssl64) from Dictyostelium discoideum (Social amoeba).